The chain runs to 1255 residues: MSKVIQKKNHWTGRVHECTVKRGPQGELGVTVLGGAEHGEFPYVGAVAAAEAAGLPGGGEGPKLAEGELLLEVQGVRVSGLPRYDVLGVIDSCKEAVTFKAVRQGGRLNKDLRHFLNQRFQKGSPDHELQQTIRDNLYRHAVPCTTRSPREGEVPGVDYSFLTVKEFLDLEQSGTLLEVGTYEGNYYGTPKPPSQPVSGKVITTDALHSLQSGSKQSTPKRTKSYNDMQNAGIVHTENEEEEDVPEMNSSFTADSGDQDEPTLQEATLPPVNSSALAAPITDPSQKFPQYLPLSAEDNLGPLPENWEMAYTENGEVYFIDHNAKTTSWLDPRCLNKQQKPLEECEDDEGVHTEELDSELELPAGWEKIEDPVYGVYYVDHINRKTQYENPVLEAKRKRQLEQQQQQQQHQQQPQQPQPPQPEEWTEDHASVVPPVAPSHPPSNPEPAREAPLQGKPFFTRNPSELEGKFIHTKLRKSSRGFGFTVVGGDEPDEFLQIKSLVLDGPAALDGKMETGDVIVSVNDTCVLGHTHAQVVKIFQSIPIGASVDLELCRGYPLPFDPDDPNTSLVTSVAILDKEPIIVNGQETYDSPASHSSKTGKVSNMKDARPSSPADVASNSSHGYPNDTVSLASSIATQPELITVHIVKGPMGFGFTIADSPGGGGQRVKQIVDSPRCRGLKEGDLIVEVNKRNVQALTHNQVVDMLIECPKGSEVTLLVQRGGLPVPKKSPKSQPLERKDSQNSSQHSVSSLRSLHTASPSHSAQVLPEYPPADVPAPDQTDSSGQKKPDPFKIWAQSRSMYEDRPMSPSPASGLSKGERDREINSTNFGECQIPDYQEQDIFLWRKETGFGFRILGGNEPGEPIYIGHIVPLGAADTDGRLRSGDELICVDGTPVIGKSHQLVVQLMQQAAKQGHVNLTVRRKVVFTVPKAENEVPSPASSHHSSNQPASLTEEKRTPQGSQNSLNTVSSGSGSTSGIGSGGGGGSGVVSAVLQPYDVEIRRGENEGFGFVIVSSVSRPEAGTTFAGNACVAMPHKIGRIIEGSPADRCGKLKVGDRILAVNGCSITNKSHSDIVNLIKEAGNTVTLRIIPGDESSNATLLTNAEKIATITTTHAPSQQGTQETRTTTKPKPDSQFEFKGPQATQEQDFYTVELERGAKGFGFSLRGGREYNMDLYVLRLAEDGPAERCGKMRIGDEILEINGETTKNMKHSRAIELIKNGGRRVRLFLRRGDGSVPEYGGSNYENIPSFPGMTP.

One can recognise a PDZ 1 domain in the interval 17 to 105 (ECTVKRGPQG…AVTFKAVRQG (89 aa)). The region spanning 96 to 287 (AVTFKAVRQG…APITDPSQKF (192 aa)) is the Guanylate kinase-like domain. 103–110 (RQGGRLNK) provides a ligand contact to ATP. Disordered stretches follow at residues 208-227 (HSLQ…SYND) and 235-265 (HTEN…TLQE). The WW 1 domain maps to 300–333 (GPLPENWEMAYTENGEVYFIDHNAKTTSWLDPRC). Serine 357 is subject to Phosphoserine. The WW 2 domain occupies 359–392 (LELPAGWEKIEDPVYGVYYVDHINRKTQYENPVL). Residues 395-462 (KRKRQLEQQQ…QGKPFFTRNP (68 aa)) are disordered. The span at 402 to 414 (QQQQQQQHQQQPQ) shows a compositional bias: low complexity. Residues 434 to 444 (PVAPSHPPSNP) show a composition bias toward pro residues. In terms of domain architecture, PDZ 2 spans 471 to 553 (HTKLRKSSRG…GASVDLELCR (83 aa)). Residues 585-601 (QETYDSPASHSSKTGKV) are compositionally biased toward polar residues. 2 disordered regions span residues 585 to 622 (QETY…SSHG) and 719 to 820 (QRGG…GERD). The region spanning 642–720 (TVHIVKGPMG…GSEVTLLVQR (79 aa)) is the PDZ 3 domain. Residues serine 729 and serine 740 each carry the phosphoserine modification. Residues 741–755 (QNSSQHSVSSLRSLH) show a composition bias toward low complexity. Position 799 is a phosphoserine (serine 799). The 83-residue stretch at 840 to 922 (DIFLWRKETG…QGHVNLTVRR (83 aa)) folds into the PDZ 4 domain. A disordered region spans residues 932-984 (ENEVPSPASSHHSSNQPASLTEEKRTPQGSQNSLNTVSSGSGSTSGIGSGGGG). Polar residues-rich tracts occupy residues 938-950 (PASS…QPAS) and 958-967 (PQGSQNSLNT). A compositionally biased stretch (gly residues) spans 974-984 (STSGIGSGGGG). A PDZ 5 domain is found at 997-1093 (DVEIRRGENE…TVTLRIIPGD (97 aa)). At serine 1070 the chain carries Phosphoserine. Over residues 1111-1129 (TTTHAPSQQGTQETRTTTK) the composition is skewed to polar residues. Positions 1111 to 1142 (TTTHAPSQQGTQETRTTTKPKPDSQFEFKGPQ) are disordered. The PDZ 6 domain maps to 1151-1233 (TVELERGAKG…RVRLFLRRGD (83 aa)).

Part of a complex composed of AMOTL2, MAGI1 and CDH5, within the complex AMOTL2 acts as a scaffold protein for the interaction of MAGI1 with CDH5. The complex is required for coupling actin fibers to cell junctions in endothelial cells. Interacts through its WW 2 domain with SYNPO and through its PDZ 5 domain with ACTN4. Interacts with cytoplasmic domain of ADGRB1. Interacts via its WW domains with DRPLA. Interacts with ESAM, LRP2 and CXADR. May interact with CTNNB1. Interacts through its PDZ 1 domain with NET1. Interacts with ASIC3 and AMOT. Interacts with FCHSD2. Interacts with IGSF5/JAM4 and through its PDZ 2 and 3 domains with NPHS1 forming a tripartite complex. Interacts with DDN. May interact (via PDZ domain) with RAPGEF2. Interacts with DLL1. Interacts with KCNJ10 and possibly with KCNJ10/KCNJ16 heterodimer; this interaction may facilitate KCNJ10/KCNJ16 potassium channel expression at the basolateral membrane in kidney tubular cells. Interacts with PRRG4 (via cytoplasmic domain).

It localises to the cell junction. Its subcellular location is the tight junction. The protein localises to the cytoplasm. It is found in the membrane. In terms of biological role, plays a role in coupling actin fibers to cell junctions in endothelial cells, via its interaction with AMOTL2 and CDH5. May regulate acid-induced ASIC3 currents by modulating its expression at the cell surface. This Rattus norvegicus (Rat) protein is Membrane-associated guanylate kinase, WW and PDZ domain-containing protein 1 (Magi1).